A 259-amino-acid chain; its full sequence is Global transcriptional regulator CodY (259 aa).

The segment at 1 to 155 is GAF domain; that stretch reads MELLAKTRKL…SSTVVGMEIL (155 aa). The segment at residues 203–222 is a DNA-binding region (H-T-H motif); that stretch reads ASKIADRVGITRSVIVNALR. S215 is modified (phosphoserine).

Belongs to the CodY family.

It localises to the cytoplasm. In terms of biological role, DNA-binding global transcriptional regulator which is involved in the adaptive response to starvation and acts by directly or indirectly controlling the expression of numerous genes in response to nutrient availability. During rapid exponential growth, CodY is highly active and represses genes whose products allow adaptation to nutrient depletion. The polypeptide is Global transcriptional regulator CodY (Bacillus mycoides (strain KBAB4) (Bacillus weihenstephanensis)).